The primary structure comprises 536 residues: Quinate permease (536 aa).

At 1–26 the chain is on the cytoplasmic side; the sequence is MTLLALKEDRPTPKAVYNWRVYTCAA. A helical membrane pass occupies residues 27-47; the sequence is IASFASCMIGYDSSFIGTTLA. The Extracellular portion of the chain corresponds to 48–74; the sequence is LPSFTKEFDFASYTPGALALLQSNIVS. The helical transmembrane segment at 75–95 threads the bilayer; that stretch reads VYQAGAFFGSLFAFATSYFLG. The Cytoplasmic portion of the chain corresponds to 96–98; sequence RRR. A helical transmembrane segment spans residues 99-119; the sequence is SLIAFSVVFIIGAAIMLAADG. Residues 120–131 are Extracellular-facing; sequence QRRGVDPIIAGR. A helical transmembrane segment spans residues 132 to 152; the sequence is VLAGIGVGGASNMVPIYISEL. At 153–160 the chain is on the cytoplasmic side; it reads APPAVRGR. Residues 161–181 traverse the membrane as a helical segment; sequence LVGIYELGWQIGGLVGFWINY. Residues 182-195 are Extracellular-facing; it reads GVNTTMAPTRSQWL. A glycan (N-linked (GlcNAc...) asparagine) is linked at N184. Residues 196–216 traverse the membrane as a helical segment; it reads IPFAVQLIPAGLLFLGSFWIP. Topologically, residues 217–285 are cytoplasmic; sequence ESPRWLFANG…SLKQPKVRWR (69 aa). The helical transmembrane segment at 286-306 threads the bilayer; that stretch reads FFLGGMLFLWQNGSGINAINY. Over 307 to 327 the chain is Extracellular; sequence YSPTVFRSIGITGTNTGFLTT. A helical transmembrane segment spans residues 328–349; it reads GIFGVVKMVLTIIWLLWLVDLV. The Cytoplasmic segment spans residues 350–352; it reads GRR. Residues 353–373 traverse the membrane as a helical segment; it reads RILFVGATGGSLCMWFIGAYI. The Extracellular portion of the chain corresponds to 374 to 389; the sequence is KIAGPGTTKTEEAKLT. The helical transmembrane segment at 390–410 threads the bilayer; sequence SGGIAAIFFFYLWTAFYTPSW. Residues 411-435 are Cytoplasmic-facing; the sequence is NGTPWVINSEMFDQNTRSLGQASAA. The chain crosses the membrane as a helical span at residues 436–456; that stretch reads ANNWFWNFIISRFTPQMFIKM. Residues 457 to 458 are Extracellular-facing; sequence EY. The helical transmembrane segment at 459–479 threads the bilayer; it reads GVYFFFASLMLLSVVFIYFFI. At 480–536 the chain is on the cytoplasmic side; sequence PETKSIPLEAMDRLFAIKSVHNANKILMDELNFDRNPEREQSSLDEKDRVTQTENAV. Positions 516 to 530 are enriched in basic and acidic residues; it reads PEREQSSLDEKDRVT. The interval 516 to 536 is disordered; that stretch reads PEREQSSLDEKDRVTQTENAV.

It belongs to the major facilitator superfamily. Sugar transporter (TC 2.A.1.1) family.

It is found in the membrane. This is Quinate permease (qa-y) from Neurospora africana.